Consider the following 1082-residue polypeptide: Transcription elongation factor SPT5 (1082 aa).

Residues 1 to 28 (MSDSEDSNFSEEEDSERSSEAEEAEVEE) are compositionally biased toward acidic residues. The tract at residues 1–88 (MSDSEDSNFS…DVDDEYEDED (88 aa)) is disordered. A phosphoserine mark is found at Ser-32 and Ser-36. 2 stretches are compositionally biased toward acidic residues: residues 38 to 62 (KEEE…EDDD) and 76 to 88 (DEAD…EDED). Lys-141 participates in a covalent cross-link: Glycyl lysine isopeptide (Lys-Gly) (interchain with G-Cter in SUMO2). Residues 174 to 268 (DPNLWTVKCK…TDVLKVVKEV (95 aa)) are interaction with SUPT4H1 and SUPT4H2. Residues 271–304 (LKPKSWVRLKRGIYKDDIAQVDYVEPSQNTISLK) enclose the KOW 1 domain. An interaction with RNA polymerase II region spans residues 311–418 (YDRIKARMSL…STGKEREHNF (108 aa)). A UBR5-degron motif is present at residues 326–332 (KRKKFKR). 2 KOW domains span residues 418 to 449 (FQPG…ITIM) and 470 to 501 (FKMG…VILF). Lys-577 provides a ligand contact to RNA. The KOW 4 domain occupies 592–625 (IHVKDIVKVIDGPHSGREGEIRHLYRSFAFLHCK). Arg-617 contributes to the DNA binding site. Thr-661 carries the post-translational modification Phosphothreonine. Phosphoserine occurs at positions 664 and 684. Residues 669 to 694 (SPMHPSAEGQHGGFGSPGGMSRGRGR) are disordered. Gly residues predominate over residues 678 to 690 (QHGGFGSPGGMSR). Asymmetric dimethylarginine; alternate occurs at positions 690 and 692. Arg-690 and Arg-692 each carry omega-N-methylarginine; alternate. Arg-692 is subject to Symmetric dimethylarginine; alternate. One can recognise a KOW 5 domain in the interval 698-731 (ELIGQTVRISQGPYKGYIGVVKDATESTARVELH). An N6-acetyllysine modification is found at Lys-712. The span at 741 to 801 (RQRLTTVDSQ…RTPHYGSQTP (61 aa)) shows a compositional bias: polar residues. The interval 741-972 (RQRLTTVDSQ…GSGIEQNSSD (232 aa)) is disordered. Residues 748–753 (DSQRPG) form a CTR1-1; approximate repeat. Residues 748-811 (DSQRPGGMTS…LHDGSRTPAQ (64 aa)) form a 9 X 7 AA approximate tandem repeats of G-S-[QR]-T-P-X-[YQ], motif CTR1 region. The CTR1-2 repeat unit spans residues 754-759 (GMTSTY). One copy of the CTR1-3 repeat lies at 760 to 765 (GRTPMY). A CTR1-4 repeat occupies 766–772 (GSQTPMY). Residues Thr-769 and Thr-778 each carry the phosphothreonine; by CDK9 modification. A CTR1-5 repeat occupies 775-781 (GSRTPMY). A CTR1-6 repeat occupies 782-788 (GSQTPLQ). Ser-783 carries the post-translational modification Phosphoserine. Thr-785 and Thr-793 each carry phosphothreonine. Residues 790–796 (GSRTPHY) form a CTR1-7 repeat. One copy of the CTR1-8 repeat lies at 797–803 (GSQTPLH). Phosphoserine is present on Ser-798. Phosphothreonine is present on residues Thr-800 and Thr-808. The CTR1-9 repeat unit spans residues 805–811 (GSRTPAQ). Residues 828-838 (EEYEYAFDDEP) are compositionally biased toward acidic residues. The stretch at 838-845 (PTPSPQAY) is one CTR2-1 repeat. A 10 X 8 AA approximate tandem repeats of P-[TS]-P-S-P-[QA]-[SG]-Y, motif CTR2 region spans residues 838 to 944 (PTPSPQAYGG…ASPSPSPVGY (107 aa)). Residues 848 to 856 (TPNPQTPGY) form a CTR2-2; approximate repeat. Positions 851–860 (PQTPGYPDPS) are enriched in pro residues. Residues 857–863 (PDPSSPQ) form a CTR2-3; approximate repeat. The span at 861 to 884 (SPQVNPQYNPQTPGTPAMYNTDQF) shows a compositional bias: polar residues. The CTR2-4; half-length repeat unit spans residues 875–879 (TPAMY). The stretch at 890 to 896 (PSPQGSY) is one CTR2-5; approximate repeat. Positions 890–905 (PSPQGSYQPSPSPQSY) are enriched in low complexity. The stretch at 898–905 (PSPSPQSY) is one CTR2-6 repeat. Residues 910–915 (PSPAGY) form a CTR2-7; approximate repeat. The stretch at 918–924 (THSPASY) is one CTR2-8 repeat. The stretch at 926–933 (PTPSPMAY) is one CTR2-9 repeat. The CTR2-10 repeat unit spans residues 937–944 (PSPSPVGY). Phosphothreonine is present on Thr-1028. Residue Lys-1031 forms a Glycyl lysine isopeptide (Lys-Gly) (interchain with G-Cter in SUMO2) linkage.

It belongs to the SPT5 family. As to quaternary structure, interacts with SUPT4H1 to form DSIF. DSIF interacts with the positive transcription elongation factor b complex (P-TEFb complex), which is composed of CDK9 and cyclin-T (CCNT1 or CCNT2). DSIF interacts with RNA polymerase II, and this interaction is reduced by phosphorylation of the C-terminal domain (CTD) of POLR2A by P-TEFb. DSIF also interacts with the NELF complex, which is composed of NELFA, NELFB, NELFD and NELFE, and this interaction occurs following prior binding of DSIF to RNA polymerase II. Also interacts with PRMT1/HRMT1L2, HTATSF1/TATSF1, RNGTT/CAP1A, PRMT5/SKB1, SUPT6H, and can interact with PIN1. Component of a complex which is at least composed of HTATSF1/Tat-SF1, the P-TEFb complex components CDK9 and CCNT1, RNA polymerase II, SUPT5H, and NCL/nucleolin. Interacts with MCM3AP. Post-translationally, methylated by PRMT1/HRMT1L2 and PRMT5/SKB1. Methylation negatively regulates interaction with P-TEFb and RNA polymerase II. In terms of processing, phosphorylated by CDK7 and CDK9. Phosphorylation by P-TEFb (CDK9) at Thr residues of the C-terminal repeats alleviates transcriptional pausing and promotes transcription elongation. Dephosphorylated by the INTAC complex when transcripts are unfavorably configured for transcriptional elongation, leading to premature transcription termination: dephosphorylation is mediated by the PPP2CA component of the INTAC complex. Dephosphorylated by the PNUTS-PP1 complex in termination zones downstream of poly(A) sites, thereby promoting deceleration of RNA polymerase II transcription. Dephosphorylated by the PNUTS-PP1 complex in termination zones downstream of poly(A) sites, thereby promoting deceleration of RNA polymerase II transcription. Phosphorylation may also stimulate interaction with PIN1. Bulk phosphorylation occurs predominantly in mitosis. Ubiquitinated by UBR5 when not assembled in the DSIF complex, leading to its degradation: UBR5 recognizes and binds a degron that is not accessible when SUPT5H is part of the DSIF complex.

The protein resides in the nucleus. In terms of biological role, component of the DRB sensitivity-inducing factor complex (DSIF complex), which regulates mRNA processing and transcription elongation by RNA polymerase II. DSIF positively regulates mRNA capping by stimulating the mRNA guanylyltransferase activity of RNGTT/CAP1A. DSIF also acts cooperatively with the negative elongation factor complex (NELF complex) to enhance transcriptional pausing at sites proximal to the promoter. Transcriptional pausing may facilitate the assembly of an elongation competent RNA polymerase II complex. DSIF and NELF promote pausing by inhibition of the transcription elongation factor TFIIS/S-II. TFIIS/S-II binds to RNA polymerase II at transcription pause sites and stimulates the weak intrinsic nuclease activity of the enzyme. Cleavage of blocked transcripts by RNA polymerase II promotes the resumption of transcription from the new 3' terminus and may allow repeated attempts at transcription through natural pause sites. Following phosphorylation by CDK9, DSIF can also positively regulate transcriptional elongation. This Mus musculus (Mouse) protein is Transcription elongation factor SPT5 (Supt5h).